The primary structure comprises 208 residues: N-(5'-phosphoribosyl)anthranilate isomerase (208 aa).

Belongs to the TrpF family.

It catalyses the reaction N-(5-phospho-beta-D-ribosyl)anthranilate = 1-(2-carboxyphenylamino)-1-deoxy-D-ribulose 5-phosphate. Its pathway is amino-acid biosynthesis; L-tryptophan biosynthesis; L-tryptophan from chorismate: step 3/5. The chain is N-(5'-phosphoribosyl)anthranilate isomerase from Neisseria gonorrhoeae (strain NCCP11945).